The primary structure comprises 80 residues: UPF0154 protein SH1564 (80 aa).

The helical transmembrane segment at 4–24 (WLAILLIIVALIGGLVGGFFL) threads the bilayer.

It belongs to the UPF0154 family.

It localises to the membrane. The polypeptide is UPF0154 protein SH1564 (Staphylococcus haemolyticus (strain JCSC1435)).